The primary structure comprises 590 residues: Type I inositol polyphosphate 5-phosphatase 1 (590 aa).

The disordered stretch occupies residues 47-73; that stretch reads DYSADSDDDYEDRSQEFDPISSGVTNP. Residues 48–57 are compositionally biased toward acidic residues; it reads YSADSDDDYE. The residue at position 60 (Ser60) is a Phosphoserine. 2 catalytic regions span residues 445 to 460 and 523 to 538; these read ERIIWLGDLNYRINLS and GKRRPAWCDRIIWNGK.

The protein belongs to the inositol polyphosphate 5-phosphatase family. Expressed ubiquitously.

It carries out the reaction 1D-myo-inositol 1,4,5-trisphosphate + H2O = 1D-myo-inositol 1,4-bisphosphate + phosphate. The catalysed reaction is 1D-myo-inositol 1,3,4,5-tetrakisphosphate + H2O = 1D-myo-inositol 1,3,4-trisphosphate + phosphate. Its function is as follows. Has phosphatase activity toward Ins(1,4,5)P3 and Ins(1,3,4,5)P4, but not toward Ins(1,4)P2, Ins(1)P. Seems to be involved in the abscisic acid (ABA) signaling pathway. Could also be able to hydrolyze PtdIns(4,5)P2 and PtdIns(3,4,5)P3. This chain is Type I inositol polyphosphate 5-phosphatase 1, found in Arabidopsis thaliana (Mouse-ear cress).